Reading from the N-terminus, the 256-residue chain is 5-oxoprolinase subunit A 2 (256 aa).

Belongs to the LamB/PxpA family. Forms a complex composed of PxpA, PxpB and PxpC.

The catalysed reaction is 5-oxo-L-proline + ATP + 2 H2O = L-glutamate + ADP + phosphate + H(+). In terms of biological role, catalyzes the cleavage of 5-oxoproline to form L-glutamate coupled to the hydrolysis of ATP to ADP and inorganic phosphate. The polypeptide is 5-oxoprolinase subunit A 2 (Bradyrhizobium diazoefficiens (strain JCM 10833 / BCRC 13528 / IAM 13628 / NBRC 14792 / USDA 110)).